We begin with the raw amino-acid sequence, 4306 residues long: Cytoplasmic dynein 2 heavy chain 1 (4306 aa).

Residues 1-1650 are stem; that stretch reads MAGSLGDVRK…YVQMVDSELQ (1650 aa). 145-152 lines the ATP pocket; sequence LGIVLRKS. A coiled-coil region spans residues 669–696; it reads KELEGYIQKLQNAAERLATENRRLRKWH. AAA stretches follow at residues 1651 to 1875, 1941 to 2161, 2249 to 2505, and 2617 to 2862; these read YTYE…VLRG, SALK…KQND, LTAD…WVLG, and HYGR…ESCK. ATP is bound by residues 1689 to 1696, 1979 to 1986, 2291 to 2298, and 2655 to 2662; these read GPAGTGKT, GPSGAGKS, GPEGCGKG, and GRSGVGRR. Residues 2880–3168 form a stalk region; the sequence is AISSSKKKEL…AEVSKAQETI (289 aa). Coiled coils occupy residues 2896–2981, 3108–3199, and 3407–3441; these read LQAG…KEVQ, LETE…LATL, and IQHE…SLLE. 2 AAA regions span residues 3243–3472 and 3689–3904; these read LCTE…LIQD and MALF…VIDR.

It belongs to the dynein heavy chain family. In terms of assembly, the cytoplasmic dynein complex 2 is probably composed by a heavy chain DYNC2H1 homodimer and a number of DYNC2LI1 light intermediate chains. As to expression, detected in brain, lung, spleen and kidney (at protein level). Enriched in the ependymal layer lining the lateral ventricles (at protein level).

The protein localises to the cytoplasm. It is found in the cytoskeleton. It localises to the cilium axoneme. The protein resides in the cell membrane. Its function is as follows. May function as a motor for intraflagellar retrograde transport. Functions in cilia biogenesis. According to PubMed:8666668, it may play a role in transport between endoplasmic reticulum and Golgi or organization of the Golgi in cells. This is Cytoplasmic dynein 2 heavy chain 1 (Dync2h1) from Mus musculus (Mouse).